We begin with the raw amino-acid sequence, 276 residues long: Stathmin domain-containing protein 1 (276 aa).

Disordered regions lie at residues 1-40 (MGCG…ENCS), 61-106 (VQMG…RERQ), and 226-250 (GFEP…ATLI). Residue G2 is the site of N-myristoyl glycine attachment. Polar residues-rich tracts occupy residues 68–78 (GTISENSPSPS) and 87–100 (DLVT…PQSL). In terms of domain architecture, SLD spans 118–244 (QGIIQSHSKV…GKPLKRKKSK (127 aa)).

This is Stathmin domain-containing protein 1 (STMND1) from Homo sapiens (Human).